Consider the following 218-residue polypeptide: 3-dehydroquinate dehydratase (218 aa).

Residues 29–31 (EFR) and Arg-56 contribute to the 3-dehydroquinate site. The active-site Proton donor/acceptor is the His-116. The active-site Schiff-base intermediate with substrate is Lys-142. Positions 180, 200, and 204 each coordinate 3-dehydroquinate.

The protein belongs to the type-I 3-dehydroquinase family. As to quaternary structure, homodimer.

The enzyme catalyses 3-dehydroquinate = 3-dehydroshikimate + H2O. It participates in metabolic intermediate biosynthesis; chorismate biosynthesis; chorismate from D-erythrose 4-phosphate and phosphoenolpyruvate: step 3/7. Its function is as follows. Involved in the third step of the chorismate pathway, which leads to the biosynthesis of aromatic amino acids. Catalyzes the cis-dehydration of 3-dehydroquinate (DHQ) and introduces the first double bond of the aromatic ring to yield 3-dehydroshikimate. The chain is 3-dehydroquinate dehydratase from Methanococcus maripaludis (strain DSM 14266 / JCM 13030 / NBRC 101832 / S2 / LL).